Consider the following 1066-residue polypeptide: Hemoglobin and hemoglobin-haptoglobin-binding protein C (1066 aa).

A signal peptide spans 1-24 (MTNFKFTLLARSIAFALNASTAYA). 7 consecutive repeat copies span residues 26 to 29 (QPTN), 30 to 33 (QPTN), 34 to 37 (QPTN), 38 to 41 (QPTN), 42 to 45 (QPTN), 46 to 49 (QPTN), and 50 to 53 (QPTN). Positions 26–53 (QPTNQPTNQPTNQPTNQPTNQPTNQPTN) are 7 X 4 AA tandem repeats of Q-P-T-N. Low complexity predominate over residues 26–54 (QPTNQPTNQPTNQPTNQPTNQPTNQPTNQ). The segment at 26-57 (QPTNQPTNQPTNQPTNQPTNQPTNQPTNQDSN) is disordered. A TonB box motif is present at residues 63-70 (EQINVSGS). In terms of domain architecture, TBDR plug spans 66 to 200 (NVSGSTETIN…LGGSVIFETK (135 aa)). A TBDR beta-barrel domain is found at 208–1066 (DKDYYVSYKR…NYRMSVQFEF (859 aa)). A TonB C-terminal box motif is present at residues 1049 to 1066 (NRLYAPGRNYRMSVQFEF).

This sequence belongs to the TonB-dependent receptor family. Hemoglobin/haptoglobin binding protein subfamily.

The protein localises to the cell outer membrane. Its function is as follows. Acts as a receptor for hemoglobin or the hemoglobin/haptoglobin complex of the human host and is required for heme uptake. The protein is Hemoglobin and hemoglobin-haptoglobin-binding protein C (hgpC) of Haemophilus influenzae.